We begin with the raw amino-acid sequence, 86 residues long: MAKKSLNETSPVARFEQSLEELEQLVQKMEVGDLSLEQSLTAYERGIGLYRDCQQTLEQAELRVRLLTDPARPELAEAFEPPSLDG.

It belongs to the XseB family. In terms of assembly, heterooligomer composed of large and small subunits.

The protein localises to the cytoplasm. The catalysed reaction is Exonucleolytic cleavage in either 5'- to 3'- or 3'- to 5'-direction to yield nucleoside 5'-phosphates.. In terms of biological role, bidirectionally degrades single-stranded DNA into large acid-insoluble oligonucleotides, which are then degraded further into small acid-soluble oligonucleotides. The sequence is that of Exodeoxyribonuclease 7 small subunit from Xanthomonas euvesicatoria pv. vesicatoria (strain 85-10) (Xanthomonas campestris pv. vesicatoria).